Consider the following 83-residue polypeptide: Delta-conotoxin-like Ac6.2 (83 aa).

Positions 1-22 are cleaved as a signal peptide; the sequence is MKLTCVVIVAVLFLTAWTFVTA. The propeptide occupies 23–51; that stretch reads DDSRYGLKNLFPKARHEMKNPEASKLNKR. Intrachain disulfides connect C54–C69, C61–C73, and C68–C78. 2 positions are modified to 4-hydroxyproline: P57 and P65.

This sequence belongs to the conotoxin O1 superfamily. Expressed by the venom duct.

It is found in the secreted. Delta-conotoxins bind to site 6 of voltage-gated sodium channels (Nav) and inhibit the inactivation process. This Conus achatinus (Little frog cone) protein is Delta-conotoxin-like Ac6.2.